A 759-amino-acid polypeptide reads, in one-letter code: Hormone-sensitive lipase (759 aa).

An Involved in the stabilization of the negatively charged intermediate by the formation of the oxyanion hole motif is present at residues 349-351 (HGG). The active site involves serine 423. The interval 534–553 (GRKPQKTTSPTAESVRPTES) is disordered. Phosphoserine is present on serine 557. Phosphoserine; by AMPK is present on serine 559. Position 574 is a phosphothreonine (threonine 574). Positions 583–604 (LSNSEPSDSPEMSQSMETLGPS) are disordered. The segment covering 585 to 604 (NSEPSDSPEMSQSMETLGPS) has biased composition (polar residues). A phosphoserine mark is found at serine 597, serine 618, serine 650, and serine 651. Active-site residues include aspartate 694 and histidine 724.

The protein belongs to the 'GDXG' lipolytic enzyme family. Monomer and homodimer. Interacts with CAVIN1 in the adipocyte cytoplasm. Interacts with PLIN5. In terms of processing, phosphorylation by AMPK reduces its translocation towards the lipid droplets.

It is found in the cell membrane. Its subcellular location is the membrane. It localises to the caveola. The protein resides in the cytoplasm. The protein localises to the cytosol. It is found in the lipid droplet. It catalyses the reaction a diacylglycerol + H2O = a monoacylglycerol + a fatty acid + H(+). It carries out the reaction a triacylglycerol + H2O = a diacylglycerol + a fatty acid + H(+). The enzyme catalyses a monoacylglycerol + H2O = glycerol + a fatty acid + H(+). The catalysed reaction is Hydrolyzes glycerol monoesters of long-chain fatty acids.. It catalyses the reaction cholesteryl (9Z-octadecenoate) + H2O = cholesterol + (9Z)-octadecenoate + H(+). It carries out the reaction all-trans-retinyl hexadecanoate + H2O = all-trans-retinol + hexadecanoate + H(+). The enzyme catalyses 1,2-di-(9Z-octadecenoyl)-glycerol + H2O = (9Z-octadecenoyl)-glycerol + (9Z)-octadecenoate + H(+). The catalysed reaction is 2-(5Z,8Z,11Z,14Z-eicosatetraenoyl)-glycerol + H2O = glycerol + (5Z,8Z,11Z,14Z)-eicosatetraenoate + H(+). It catalyses the reaction 1-(9Z-octadecenoyl)-glycerol + H2O = glycerol + (9Z)-octadecenoate + H(+). It carries out the reaction 2-(9Z-octadecenoyl)-glycerol + H2O = glycerol + (9Z)-octadecenoate + H(+). The enzyme catalyses 1-O-hexadecyl-2-acetyl-sn-glycerol + H2O = 1-O-hexadecyl-sn-glycerol + acetate + H(+). The catalysed reaction is 1,2-di-(9Z-octadecenoyl)-sn-glycerol + H2O = (9Z-octadecenoyl)-glycerol + (9Z)-octadecenoate + H(+). It catalyses the reaction 1,3-di-(9Z-octadecenoyl)-glycerol + H2O = 1-(9Z-octadecenoyl)-glycerol + (9Z)-octadecenoate + H(+). It carries out the reaction 1,2-di-(9Z-octadecenoyl)-glycerol + (9Z)-octadecenoate + H(+) = 1,2,3-tri-(9Z-octadecenoyl)-glycerol + H2O. The enzyme catalyses 2,3-di-(9Z)-octadecenoyl-sn-glycerol + H2O = 2-(9Z-octadecenoyl)-glycerol + (9Z)-octadecenoate + H(+). The catalysed reaction is 1,2,3-tri-(9Z-octadecenoyl)-glycerol + H2O = di-(9Z)-octadecenoylglycerol + (9Z)-octadecenoate + H(+). It catalyses the reaction 1,2-di-(9Z-octadecenoyl)-glycerol + H2O = 2-(9Z-octadecenoyl)-glycerol + (9Z)-octadecenoate + H(+). It functions in the pathway glycerolipid metabolism; triacylglycerol degradation. In terms of biological role, lipase with broad substrate specificity, catalyzing the hydrolysis of triacylglycerols (TAGs), diacylglycerols (DAGs), monoacylglycerols (MAGs), cholesteryl esters and retinyl esters. Shows a preferential hydrolysis of DAGs over TAGs and MAGs and of the fatty acid (FA) esters at the sn-1 and sn-2 positions of the glycerol backbone in TAGs. Preferentially hydrolyzes FA esters at the sn-3 position of the glycerol backbone in DAGs. Catalyzes the hydrolysis of 2-arachidonoylglycerol, an endocannabinoid and of 2-acetyl monoalkylglycerol ether, the penultimate precursor of the pathway for de novo synthesis of platelet-activating factor. In adipose tissue and heart, it primarily hydrolyzes stored triglycerides to free fatty acids, while in steroidogenic tissues, it principally converts cholesteryl esters to free cholesterol for steroid hormone production. The polypeptide is Hormone-sensitive lipase (Lipe) (Mus musculus (Mouse)).